The sequence spans 957 residues: Calsyntenin-3 (957 aa).

An N-terminal signal peptide occupies residues 1 to 19; the sequence is MTLLLVSLLLASLLQISSG. The Cytoplasmic segment spans residues 1–21; sequence MTLLLVSLLLASLLQISSGNK. At 20-848 the chain is on the extracellular side; sequence NKANKHKPWI…SHRNSMVPSA (829 aa). Positions 22–42 form an intramembrane region, helical; it reads ANKHKPWIEAEYQGIVMENDN. Cadherin domains lie at 29–145 and 146–246; these read IEAE…APVF and VERL…KPSW. Over 43 to 73 the chain is Cytoplasmic; sequence TVLLNPPLFALDKDAPLRYAGEICGFRLHGS. Residues 74 to 94 constitute an intramembrane region (helical); sequence GVPFKAVILDKATGEGLIRAK. Residues 95 to 139 lie on the Cytoplasmic side of the membrane; that stretch reads EPVDCEAQKEHTFTTQAYDCVDGPDGANTKKSHKATVHVRVNDVN. Positions 140–160 form an intramembrane region, helical; the sequence is EFAPVFVERLYRAAVTEGKLY. Topologically, residues 161–248 are cytoplasmic; that stretch reads DRILRVEAID…KPTCKPSWQG (88 aa). Residues 249–269 traverse the membrane as a helical segment; that stretch reads WNKRIEYAPGAGSLALFPGIR. Residues 270–357 lie on the Lumenal side of the membrane; the sequence is LETCDEPLWN…GTQAVQVPLG (88 aa). N-linked (GlcNAc...) asparagine glycosylation is found at asparagine 299, asparagine 327, asparagine 347, asparagine 508, and asparagine 741. A helical transmembrane segment spans residues 849 to 869; it reads ATLIIVVCVGFLVLMVILGLV. Residues 870 to 957 are Cytoplasmic-facing; the sequence is RIHSLHRRVS…RIIESPPHRY (88 aa). The interval 916–957 is disordered; the sequence is QQTGVAGVAGGQQEEEDSSDSEAADSPSSDERRIIESPPHRY. A compositionally biased stretch (acidic residues) spans 928–938; sequence QEEEDSSDSEA. Residues 944–957 show a composition bias toward basic and acidic residues; it reads SDERRIIESPPHRY.

It belongs to the calsyntenin family. Interacts (via cadherin domains) with both alpha and beta isoforms of neurexins (NRXN1, NRXN2 and NRXN3). Directly interacts with APBA2. Forms a tripartite complex with APBA2 and APP. Interacts with low affinity with KLC1. Interacts with SLC23A2/SVCT2. In terms of assembly, interacts with CIDEA; inhibiting the lipid transferase activity of CIDEA. Interacts with CIDEC; inhibiting the lipid transferase activity of CIDEC. Post-translationally, proteolytically processed under normal cellular conditions. A primary zeta-cleavage generates a large extracellular (soluble) N-terminal domain (sAlc) and a short C-terminal transmembrane fragment (CTF1). A secondary cleavage catalyzed by gamma-secretase within the transmembrane domain releases the beta-Alc-beta chain in the extracellular milieu and produces an intracellular fragment (AlcICD). This processing is strongly suppressed in the tripartite complex formed with APBA2 and APP, which seems to prevent the association with gamma-secretase. In terms of processing, ubiquitinated: endoplasmic reticulum-localized protein is ubiquitinated and degraded by the endoplasmic reticulum-associated degradation (ERAD) pathway.

It localises to the postsynaptic cell membrane. It is found in the endoplasmic reticulum membrane. The protein resides in the golgi apparatus membrane. Its subcellular location is the cell projection. The protein localises to the dendrite. It localises to the lipid droplet. Postsynaptic adhesion molecule that binds to presynaptic neurexins to mediate both excitatory and inhibitory synapse formation. Promotes synapse development by acting as a cell adhesion molecule at the postsynaptic membrane, which associates with both neurexin-alpha and neurexin-beta proteins at the presynaptic membrane. Regulates the balance between excitatory and inhibitory synapses by inhibiting formation of excitatory parallel-fiber synapses and promoting formation of inhibitory synapses in the same neuron. May also be involved in ascorbate (vitamin C) uptake via its interaction with SLC23A2/SVCT2. Complex formation with APBA2 and APP, stabilizes APP metabolism and enhances APBA2-mediated suppression of beta-APP40 secretion, due to the retardation of intracellular APP maturation. Its function is as follows. Adipose-specific isoform that plays a key role in adaptive thermogenesis. Facilitates the efficient use of stored triglyceride by promoting multilocular morphology of thermogenic adipocytes: acts by inhibiting the activity of CIDEA and CIDEC on lipid droplets, thereby preventing lipid droplet fusion and facilitating lipid utilization. May also participate in adaptive thermogenesis by promoting sympathetic innervation of thermogenic adipose tissue: acts by driving secretion of neurotrophic factor S100B from brown adipocytes, stimulating neurite outgrowth from sympathetic neurons. The sequence is that of Calsyntenin-3 from Rattus norvegicus (Rat).